The primary structure comprises 205 residues: Guanylate kinase (205 aa).

A Guanylate kinase-like domain is found at 5-183; the sequence is GLLIVFSGPS…AAERVKKIIE (179 aa). 12-19 is a binding site for ATP; the sequence is GPSGVGKG.

This sequence belongs to the guanylate kinase family.

Its subcellular location is the cytoplasm. The catalysed reaction is GMP + ATP = GDP + ADP. In terms of biological role, essential for recycling GMP and indirectly, cGMP. The protein is Guanylate kinase (gmk) of Lactococcus lactis subsp. lactis (strain IL1403) (Streptococcus lactis).